The following is a 206-amino-acid chain: Large ribosomal subunit protein uL4 (206 aa).

Positions 47–76 are disordered; that stretch reads GTQSAKTRAEVSGGGIKPWRQKGTGRARQG.

It belongs to the universal ribosomal protein uL4 family. In terms of assembly, part of the 50S ribosomal subunit.

Functionally, one of the primary rRNA binding proteins, this protein initially binds near the 5'-end of the 23S rRNA. It is important during the early stages of 50S assembly. It makes multiple contacts with different domains of the 23S rRNA in the assembled 50S subunit and ribosome. Its function is as follows. Forms part of the polypeptide exit tunnel. This is Large ribosomal subunit protein uL4 from Clostridium botulinum (strain Okra / Type B1).